Here is an 848-residue protein sequence, read N- to C-terminus: Trimethylamine-N-oxide reductase 1 (848 aa).

A signal peptide (tat-type signal) is located at residues 1–39 (MNNNDLFQASRRRFLAQLGGLTVAGMLGTSLLTPRRATA). Serine 191 serves as a coordination point for Mo-bis(molybdopterin guanine dinucleotide).

Belongs to the prokaryotic molybdopterin-containing oxidoreductase family. Requires Mo-bis(molybdopterin guanine dinucleotide) as cofactor. Predicted to be exported by the Tat system. The position of the signal peptide cleavage has not been experimentally proven.

It localises to the periplasm. The catalysed reaction is trimethylamine + 2 Fe(III)-[cytochrome c] + H2O = trimethylamine N-oxide + 2 Fe(II)-[cytochrome c] + 3 H(+). Its function is as follows. Reduces trimethylamine-N-oxide (TMAO) into trimethylamine; an anaerobic reaction coupled to energy-yielding reactions. The chain is Trimethylamine-N-oxide reductase 1 (torA) from Escherichia coli O6:H1 (strain CFT073 / ATCC 700928 / UPEC).